A 228-amino-acid chain; its full sequence is Lipoprotein LpqN (228 aa).

A signal peptide spans 1–19; that stretch reads MKHFTAAVATVALSLALAG. C20 carries the N-palmitoyl cysteine lipid modification. C20 is lipidated: S-diacylglycerol cysteine. The disordered stretch occupies residues 26–53; it reads TDSAPTTSPTTTSPTTSTTTTSATTSAQ. Residues 28–52 are compositionally biased toward low complexity; the sequence is SAPTTSPTTTSPTTSTTTTSATTSA.

As to quaternary structure, interacts with the periplasmic loop domains of the mycolate transporters MmpL3 and MmpL11. Also interacts with secreted cell envelope biosynthetic enzymes such as Ag85A. These interactions are weak and may require a putative mycobacterial adapter protein or molecule. Interacts with human ubiquitin ligase CBL.

The protein resides in the cell membrane. It is found in the secreted. Its function is as follows. Involved in cell envelope biogenesis. May act as a membrane fusion protein, connecting MmpL transporters with periplasmic proteins, and play a role in cell envelope lipid changes during biofilm maturation. Is also a virulence factor required for intracellular survival. Associates with CBL, a host ubiquitin ligase, and probably blocks the normal functions of CBL and disturbs CBL-mediated antibacterial activity. Interaction counteracts antibacterial defense but causes a reciprocal enhancement of antiviral defense. This chain is Lipoprotein LpqN, found in Mycobacterium tuberculosis (strain ATCC 25618 / H37Rv).